Reading from the N-terminus, the 237-residue chain is DNA repair protein RecO (237 aa).

The protein belongs to the RecO family.

Functionally, involved in DNA repair and RecF pathway recombination. The protein is DNA repair protein RecO of Actinobacillus succinogenes (strain ATCC 55618 / DSM 22257 / CCUG 43843 / 130Z).